A 736-amino-acid chain; its full sequence is ATP-dependent zinc metalloprotease FtsH (736 aa).

Disordered regions lie at residues 1 to 39 (MDSNVDSQRVPDGQIFFRPVHPGISGKDMESGTSDGQQR) and 57 to 83 (QQTQNRTGFASADTKQGSPEGADRKKM). Residues 1–87 (MDSNVDSQRV…ADRKKMPPGK (87 aa)) are Cytoplasmic-facing. Residues 57-73 (QQTQNRTGFASADTKQG) show a composition bias toward polar residues. The chain crosses the membrane as a helical span at residues 88–108 (AWLWFVLILIVNFLMVRLLIP). Residues 109 to 205 (DAEQPVMVPY…KPIHEERSPW (97 aa)) are Periplasmic-facing. Residues 206–226 (ATIVYSFGPGLLFIAFYIWLF) form a helical membrane-spanning segment. The Cytoplasmic segment spans residues 227–736 (RRMAQQGGLG…VSLPGVAGPS (510 aa)). 301-308 (GAPGTGKT) is an ATP binding site. H522 lines the Zn(2+) pocket. E523 is a catalytic residue. Positions 526 and 598 each coordinate Zn(2+). The segment at 706-736 (PALDAGKLPVPDGGDKNAEPSVSLPGVAGPS) is disordered.

The protein in the central section; belongs to the AAA ATPase family. This sequence in the C-terminal section; belongs to the peptidase M41 family. As to quaternary structure, homohexamer. It depends on Zn(2+) as a cofactor.

Its subcellular location is the cell inner membrane. Acts as a processive, ATP-dependent zinc metallopeptidase for both cytoplasmic and membrane proteins. Plays a role in the quality control of integral membrane proteins. The sequence is that of ATP-dependent zinc metalloprotease FtsH from Syntrophus aciditrophicus (strain SB).